A 369-amino-acid polypeptide reads, in one-letter code: Cobalt-precorrin-5B C(1)-methyltransferase (369 aa).

The protein belongs to the CbiD family.

The enzyme catalyses Co-precorrin-5B + S-adenosyl-L-methionine = Co-precorrin-6A + S-adenosyl-L-homocysteine. It participates in cofactor biosynthesis; adenosylcobalamin biosynthesis; cob(II)yrinate a,c-diamide from sirohydrochlorin (anaerobic route): step 6/10. Catalyzes the methylation of C-1 in cobalt-precorrin-5B to form cobalt-precorrin-6A. The sequence is that of Cobalt-precorrin-5B C(1)-methyltransferase from Methanococcus vannielii (strain ATCC 35089 / DSM 1224 / JCM 13029 / OCM 148 / SB).